The following is a 663-amino-acid chain: Transketolase 2 (663 aa).

Histidine 25 provides a ligand contact to substrate. Thiamine diphosphate-binding positions include histidine 65 and 113-115; that span reads GPL. Aspartate 154 is a Mg(2+) binding site. Positions 155 and 184 each coordinate thiamine diphosphate. The Mg(2+) site is built by asparagine 184 and isoleucine 186. Substrate contacts are provided by histidine 259, arginine 356, and serine 383. Histidine 259 serves as a coordination point for thiamine diphosphate. Residue glutamate 410 is the Proton donor of the active site. Phenylalanine 436 serves as a coordination point for thiamine diphosphate. Histidine 460, aspartate 468, and arginine 519 together coordinate substrate.

The protein belongs to the transketolase family. Homodimer. Mg(2+) is required as a cofactor. Ca(2+) serves as cofactor. It depends on Mn(2+) as a cofactor. Requires Co(2+) as cofactor. The cofactor is thiamine diphosphate.

The enzyme catalyses D-sedoheptulose 7-phosphate + D-glyceraldehyde 3-phosphate = aldehydo-D-ribose 5-phosphate + D-xylulose 5-phosphate. Catalyzes the transfer of a two-carbon ketol group from a ketose donor to an aldose acceptor, via a covalent intermediate with the cofactor thiamine pyrophosphate. The sequence is that of Transketolase 2 (tkt2) from Vibrio vulnificus (strain CMCP6).